Consider the following 685-residue polypeptide: Sulfite reductase [ferredoxin], chloroplastic (685 aa).

Residues 1-51 (MTTSFAAAALRDPKLQIPNYHGLRSSSAASSLSRNALSVPSSTRSSSLIRA) constitute a chloroplast transit peptide. Cysteine 495, cysteine 501, cysteine 541, and cysteine 545 together coordinate [4Fe-4S] cluster. Cysteine 545 is a binding site for siroheme.

This sequence belongs to the nitrite and sulfite reductase 4Fe-4S domain family. Monomer. Interacts with ferredoxin. Requires siroheme as cofactor. [4Fe-4S] cluster serves as cofactor. Post-translationally, phosphorylated; this phosphorylation reduces DNA-binding. Expressed in leaves, stems, and roots.

It localises to the plastid. It is found in the chloroplast stroma. The protein localises to the chloroplast nucleoid. The protein resides in the plastid stroma. It carries out the reaction hydrogen sulfide + 6 oxidized [2Fe-2S]-[ferredoxin] + 3 H2O = sulfite + 6 reduced [2Fe-2S]-[ferredoxin] + 7 H(+). Its function is as follows. Essential protein with sulfite reductase activity required in assimilatory sulfate reduction pathway during both primary and secondary metabolism and thus involved in development and growth. DNA-binding protein that binds to both double-stranded and single-stranded DNA without significant sequence specificity to reversibly repress the transcriptional activity of chloroplast nucleoids by promoting DNA compaction and possibly regulate DNA replication. The sequence is that of Sulfite reductase [ferredoxin], chloroplastic (SIR) from Pisum sativum (Garden pea).